The primary structure comprises 137 residues: Large ribosomal subunit protein uL16c (137 aa).

It belongs to the universal ribosomal protein uL16 family. In terms of assembly, part of the 50S ribosomal subunit.

It localises to the plastid. This Helicosporidium sp. subsp. Simulium jonesii (Green alga) protein is Large ribosomal subunit protein uL16c (rpl16).